The sequence spans 236 residues: Uridylate kinase (236 aa).

10 to 13 provides a ligand contact to ATP; the sequence is KLSG. Gly-52 provides a ligand contact to UMP. ATP contacts are provided by Gly-53 and Arg-57. UMP-binding positions include Asp-72 and 133 to 140; that span reads TGNPFFTT. Thr-160, Tyr-166, and Asp-169 together coordinate ATP.

It belongs to the UMP kinase family. Homohexamer.

It localises to the cytoplasm. The catalysed reaction is UMP + ATP = UDP + ADP. It participates in pyrimidine metabolism; CTP biosynthesis via de novo pathway; UDP from UMP (UMPK route): step 1/1. With respect to regulation, inhibited by UTP. Functionally, catalyzes the reversible phosphorylation of UMP to UDP. The sequence is that of Uridylate kinase from Cupriavidus metallidurans (strain ATCC 43123 / DSM 2839 / NBRC 102507 / CH34) (Ralstonia metallidurans).